Reading from the N-terminus, the 290-residue chain is Porphobilinogen deaminase (290 aa).

At cysteine 238 the chain carries S-(dipyrrolylmethanemethyl)cysteine.

This sequence belongs to the HMBS family. As to quaternary structure, monomer. Requires dipyrromethane as cofactor.

It carries out the reaction 4 porphobilinogen + H2O = hydroxymethylbilane + 4 NH4(+). It functions in the pathway porphyrin-containing compound metabolism; protoporphyrin-IX biosynthesis; coproporphyrinogen-III from 5-aminolevulinate: step 2/4. Tetrapolymerization of the monopyrrole PBG into the hydroxymethylbilane pre-uroporphyrinogen in several discrete steps. The polypeptide is Porphobilinogen deaminase (Caldicellulosiruptor saccharolyticus (strain ATCC 43494 / DSM 8903 / Tp8T 6331)).